We begin with the raw amino-acid sequence, 265 residues long: Type 1 encapsulin shell protein (265 aa).

It belongs to the encapsulin family. Family 1 subfamily. As to quaternary structure, multimeric. The encapsulin nanocompartment is formed by 60 subunits. Monomers form pentamers which assemble to form shells. There are 12 pores where the pentamers meet as well as 3-fold axis channels and dimer channels; none are larger than 3-4 Angstroms in diameter. The N-terminus of the protein is inside the shell, the C-terminus is outside. In terms of processing, the initiator methionine is partially removed. When isolated from culture filtrate isoelectric focusing gives 3 bands, none of which are glycosylated.

It localises to the encapsulin nanocompartment. Its subcellular location is the secreted. The protein resides in the cell membrane. Shell component of a type 1 encapsulin nanocompartment in situ; its cargo protects against oxidative stress at low pH. In situ and in E.coli assembles into proteinaceous shells about 22 nm in diameter with 2.5 nm thick walls. Cargo proteins are targeted to the interior via their C-terminal extensions; empty intact shells can be isolated in E.coli in the absence of cargo protein. There are at least 4 possible cargo proteins, DyP (encoded in the same locus), FolB, BfrB and Rv1762c; DyP and Rv1762c have been identified in vivo. Probably involved in protection against oxidative damage from the host immune response. A T-cell antigen found in bacterial culture cell filtrates, stimulates mouse immune response. Does not have detectable bacteriocin activity. The polypeptide is Type 1 encapsulin shell protein (Mycobacterium tuberculosis (strain ATCC 25618 / H37Rv)).